Reading from the N-terminus, the 140-residue chain is uncharacterized protein (140 aa).

The tract at residues 62–140 (TEARAGRGGP…PQGRWGPSLG (79 aa)) is disordered. Residues 71–94 (PATARSRVSADSQGGRAGSSSPSS) are compositionally biased toward low complexity.

This is an uncharacterized protein from Homo sapiens (Human).